The following is a 337-amino-acid chain: Holliday junction branch migration complex subunit RuvB (337 aa).

Residues 4 to 186 (ADRLIAADNP…FGIVQRLEYY (183 aa)) form a large ATPase domain (RuvB-L) region. Residues I25, R26, G67, K70, T71, T72, 133–135 (EDY), R176, Y186, and R223 each bind ATP. T71 serves as a coordination point for Mg(2+). The tract at residues 187–257 (KVDDLQYIVQ…IADKALNMLD (71 aa)) is small ATPAse domain (RuvB-S). The segment at 260–337 (VCGFDYMDRK…LHFGIDRPDK (78 aa)) is head domain (RuvB-H). R315 and R320 together coordinate DNA.

Belongs to the RuvB family. In terms of assembly, homohexamer. Forms an RuvA(8)-RuvB(12)-Holliday junction (HJ) complex. HJ DNA is sandwiched between 2 RuvA tetramers; dsDNA enters through RuvA and exits via RuvB. An RuvB hexamer assembles on each DNA strand where it exits the tetramer. Each RuvB hexamer is contacted by two RuvA subunits (via domain III) on 2 adjacent RuvB subunits; this complex drives branch migration. In the full resolvosome a probable DNA-RuvA(4)-RuvB(12)-RuvC(2) complex forms which resolves the HJ.

Its subcellular location is the cytoplasm. The catalysed reaction is ATP + H2O = ADP + phosphate + H(+). Functionally, the RuvA-RuvB-RuvC complex processes Holliday junction (HJ) DNA during genetic recombination and DNA repair, while the RuvA-RuvB complex plays an important role in the rescue of blocked DNA replication forks via replication fork reversal (RFR). RuvA specifically binds to HJ cruciform DNA, conferring on it an open structure. The RuvB hexamer acts as an ATP-dependent pump, pulling dsDNA into and through the RuvAB complex. RuvB forms 2 homohexamers on either side of HJ DNA bound by 1 or 2 RuvA tetramers; 4 subunits per hexamer contact DNA at a time. Coordinated motions by a converter formed by DNA-disengaged RuvB subunits stimulates ATP hydrolysis and nucleotide exchange. Immobilization of the converter enables RuvB to convert the ATP-contained energy into a lever motion, pulling 2 nucleotides of DNA out of the RuvA tetramer per ATP hydrolyzed, thus driving DNA branch migration. The RuvB motors rotate together with the DNA substrate, which together with the progressing nucleotide cycle form the mechanistic basis for DNA recombination by continuous HJ branch migration. Branch migration allows RuvC to scan DNA until it finds its consensus sequence, where it cleaves and resolves cruciform DNA. This chain is Holliday junction branch migration complex subunit RuvB, found in Aliivibrio salmonicida (strain LFI1238) (Vibrio salmonicida (strain LFI1238)).